We begin with the raw amino-acid sequence, 313 residues long: Metal ABC transporter substrate-binding lipoprotein (313 aa).

The signal sequence occupies residues Met-1–Gly-23. Residue Cys-24 is the site of N-palmitoyl cysteine attachment. Cys-24 carries S-diacylglycerol cysteine lipidation. The Zn(2+) site is built by His-71, His-143, Glu-209, and Asp-284.

It belongs to the bacterial solute-binding protein 9 family. Lipoprotein receptor antigen (Lrai) subfamily.

It localises to the cell membrane. Its function is as follows. Part of an ATP-driven transport system for a metal; probably for manganese. This is Metal ABC transporter substrate-binding lipoprotein (mtsA) from Lactococcus lactis subsp. lactis (strain IL1403) (Streptococcus lactis).